The chain runs to 258 residues: MNSIDPRAIIDPSAKLADGVEVGPWSIVGPDVEIGEGTVIGPHVVLKGPTRIGKHNRIFQFSSIGEDTPDLKYKGEPTRLVIGDHNVIREGVTIHRGTVQDRAETTVGDHNLIMAYAHIGHDSVIGNHCILVNNTALAGHVHVGDWAILSGYTLVHQYCHIGAHAFSGMGTAIGKDVPAFVTVFGSPAEARSMNFEGMRRRGFSDEVIHVLRRCYKIVYRQGLTVEDALKELAEPATQHPEVELFRQSILSSARGITR.

This sequence belongs to the transferase hexapeptide repeat family. LpxA subfamily. Homotrimer.

Its subcellular location is the cytoplasm. The enzyme catalyses a (3R)-hydroxyacyl-[ACP] + UDP-N-acetyl-alpha-D-glucosamine = a UDP-3-O-[(3R)-3-hydroxyacyl]-N-acetyl-alpha-D-glucosamine + holo-[ACP]. The protein operates within glycolipid biosynthesis; lipid IV(A) biosynthesis; lipid IV(A) from (3R)-3-hydroxytetradecanoyl-[acyl-carrier-protein] and UDP-N-acetyl-alpha-D-glucosamine: step 1/6. Functionally, involved in the biosynthesis of lipid A, a phosphorylated glycolipid that anchors the lipopolysaccharide to the outer membrane of the cell. This chain is Acyl-[acyl-carrier-protein]--UDP-N-acetylglucosamine O-acyltransferase, found in Pseudomonas putida (strain ATCC 47054 / DSM 6125 / CFBP 8728 / NCIMB 11950 / KT2440).